Here is a 335-residue protein sequence, read N- to C-terminus: Phosphate acyltransferase (335 aa).

It belongs to the PlsX family. As to quaternary structure, homodimer. Probably interacts with PlsY.

It localises to the cytoplasm. The enzyme catalyses a fatty acyl-[ACP] + phosphate = an acyl phosphate + holo-[ACP]. The protein operates within lipid metabolism; phospholipid metabolism. Catalyzes the reversible formation of acyl-phosphate (acyl-PO(4)) from acyl-[acyl-carrier-protein] (acyl-ACP). This enzyme utilizes acyl-ACP as fatty acyl donor, but not acyl-CoA. The sequence is that of Phosphate acyltransferase from Streptococcus equi subsp. zooepidemicus (strain MGCS10565).